The following is a 163-amino-acid chain: Nucleotide-binding protein Noca_0564 (163 aa).

This sequence belongs to the YajQ family.

Functionally, nucleotide-binding protein. The polypeptide is Nucleotide-binding protein Noca_0564 (Nocardioides sp. (strain ATCC BAA-499 / JS614)).